Consider the following 33-residue polypeptide: Beta/kappa-theraphotoxin-Hlv1a (33 aa).

Cystine bridges form between C2-C17, C9-C22, and C16-C29. Residue I33 is modified to Isoleucine amide.

Belongs to the neurotoxin 10 (Hwtx-1) family. 11 (haplotoxin-2) subfamily. Expressed by the venom gland.

The protein resides in the secreted. Its function is as follows. Spider venom neurotoxin that blocks voltage-gated sodium channel Nav1.3/SCN3A in human (IC(50)=80 nM) and rat (IC(50)=160 nM). Partially inhibits human Kv11.1/KCNH2/ERG (25% at 175 uM). The sequence is that of Beta/kappa-theraphotoxin-Hlv1a from Cyriopagopus lividus (Cobalt blue tarantula).